The primary structure comprises 212 residues: ATP-dependent dethiobiotin synthetase BioD (212 aa).

Residue 12–17 coordinates ATP; the sequence is DCGKTF. Thr-16 lines the Mg(2+) pocket. Lys-33 is an active-site residue. Ser-37 contributes to the substrate binding site. ATP is bound by residues Asp-50, 110–113, and 170–171; these read EGAG and NC. Positions 50 and 110 each coordinate Mg(2+).

This sequence belongs to the dethiobiotin synthetase family. As to quaternary structure, homodimer. Requires Mg(2+) as cofactor.

It is found in the cytoplasm. The catalysed reaction is (7R,8S)-7,8-diammoniononanoate + CO2 + ATP = (4R,5S)-dethiobiotin + ADP + phosphate + 3 H(+). It participates in cofactor biosynthesis; biotin biosynthesis; biotin from 7,8-diaminononanoate: step 1/2. Its function is as follows. Catalyzes a mechanistically unusual reaction, the ATP-dependent insertion of CO2 between the N7 and N8 nitrogen atoms of 7,8-diaminopelargonic acid (DAPA, also called 7,8-diammoniononanoate) to form a ureido ring. The sequence is that of ATP-dependent dethiobiotin synthetase BioD from Legionella pneumophila (strain Lens).